Reading from the N-terminus, the 212-residue chain is Uracil phosphoribosyltransferase (212 aa).

5-phospho-alpha-D-ribose 1-diphosphate-binding positions include Arg-78, Arg-103, and 130–138; that span reads DPMLATGGS. Uracil-binding positions include Ile-193 and 198-200; that span reads GDA. Residue Asp-199 coordinates 5-phospho-alpha-D-ribose 1-diphosphate.

This sequence belongs to the UPRTase family. The cofactor is Mg(2+).

It carries out the reaction UMP + diphosphate = 5-phospho-alpha-D-ribose 1-diphosphate + uracil. It functions in the pathway pyrimidine metabolism; UMP biosynthesis via salvage pathway; UMP from uracil: step 1/1. Allosterically activated by GTP. Its function is as follows. Catalyzes the conversion of uracil and 5-phospho-alpha-D-ribose 1-diphosphate (PRPP) to UMP and diphosphate. The protein is Uracil phosphoribosyltransferase of Pseudomonas paraeruginosa (strain DSM 24068 / PA7) (Pseudomonas aeruginosa (strain PA7)).